The primary structure comprises 295 residues: Protease HtpX homolog (295 aa).

Helical transmembrane passes span Leu-15–Phe-35 and Ala-39–Gly-59. His-143 contributes to the Zn(2+) binding site. Residue Glu-144 is part of the active site. Zn(2+) is bound at residue His-147. A run of 2 helical transmembrane segments spans residues Ala-159–Trp-179 and Val-195–Ala-215. Glu-224 lines the Zn(2+) pocket.

This sequence belongs to the peptidase M48B family. It depends on Zn(2+) as a cofactor.

It localises to the cell membrane. This Ligilactobacillus salivarius (strain UCC118) (Lactobacillus salivarius) protein is Protease HtpX homolog.